A 246-amino-acid polypeptide reads, in one-letter code: Protein crossbronx (246 aa).

Residues 20-177 (QQEYKILAEY…VQESILESKA (158 aa)) enclose the UBC core domain.

It belongs to the ubiquitin-conjugating enzyme family. FTS subfamily.

The protein is Protein crossbronx (cbx) of Drosophila grimshawi (Hawaiian fruit fly).